Consider the following 308-residue polypeptide: tRNA dimethylallyltransferase (308 aa).

9 to 16 lines the ATP pocket; the sequence is GPTAAGKT. Residue 11-16 coordinates substrate; that stretch reads TAAGKT. Interaction with substrate tRNA regions lie at residues 34 to 37 and 158 to 162; these read DSMQ and QRLLR.

This sequence belongs to the IPP transferase family. In terms of assembly, monomer. It depends on Mg(2+) as a cofactor.

It carries out the reaction adenosine(37) in tRNA + dimethylallyl diphosphate = N(6)-dimethylallyladenosine(37) in tRNA + diphosphate. In terms of biological role, catalyzes the transfer of a dimethylallyl group onto the adenine at position 37 in tRNAs that read codons beginning with uridine, leading to the formation of N6-(dimethylallyl)adenosine (i(6)A). This Maricaulis maris (strain MCS10) (Caulobacter maris) protein is tRNA dimethylallyltransferase.